We begin with the raw amino-acid sequence, 332 residues long: Methionine synthase (332 aa).

Zn(2+) is bound by residues H211, C213, and C296.

It belongs to the archaeal MetE family. It depends on Zn(2+) as a cofactor.

Its pathway is amino-acid biosynthesis; L-methionine biosynthesis via de novo pathway. Functionally, catalyzes the transfer of a methyl group to L-homocysteine resulting in methionine formation. The physiological methyl donor is unknown. The chain is Methionine synthase from Saccharolobus islandicus (strain L.S.2.15 / Lassen #1) (Sulfolobus islandicus).